Consider the following 208-residue polypeptide: Small ribosomal subunit protein uS4 (208 aa).

One can recognise an S4 RNA-binding domain in the interval 98-158; it reads RRLDNVVYRL…EKSRGQLRIK (61 aa).

Belongs to the universal ribosomal protein uS4 family. In terms of assembly, part of the 30S ribosomal subunit. Contacts protein S5. The interaction surface between S4 and S5 is involved in control of translational fidelity.

Its function is as follows. One of the primary rRNA binding proteins, it binds directly to 16S rRNA where it nucleates assembly of the body of the 30S subunit. In terms of biological role, with S5 and S12 plays an important role in translational accuracy. This chain is Small ribosomal subunit protein uS4, found in Magnetococcus marinus (strain ATCC BAA-1437 / JCM 17883 / MC-1).